Reading from the N-terminus, the 102-residue chain is Integration host factor subunit beta (102 aa).

It belongs to the bacterial histone-like protein family. As to quaternary structure, heterodimer of an alpha and a beta chain.

This protein is one of the two subunits of integration host factor, a specific DNA-binding protein that functions in genetic recombination as well as in transcriptional and translational control. The chain is Integration host factor subunit beta from Marinomonas sp. (strain MWYL1).